Here is a 279-residue protein sequence, read N- to C-terminus: NH(3)-dependent NAD(+) synthetase (279 aa).

An ATP-binding site is contributed by 40–47 (GLSGGIDS). Asp46 contributes to the Mg(2+) binding site. Residue Arg122 coordinates deamido-NAD(+). ATP is bound at residue Thr142. Residue Glu147 coordinates Mg(2+). Residues Lys155 and Asp162 each contribute to the deamido-NAD(+) site. The ATP site is built by Lys171 and Ser193. Residue 253–254 (HK) participates in deamido-NAD(+) binding.

The protein belongs to the NAD synthetase family. As to quaternary structure, homodimer.

The enzyme catalyses deamido-NAD(+) + NH4(+) + ATP = AMP + diphosphate + NAD(+) + H(+). The protein operates within cofactor biosynthesis; NAD(+) biosynthesis; NAD(+) from deamido-NAD(+) (ammonia route): step 1/1. Its function is as follows. Catalyzes the ATP-dependent amidation of deamido-NAD to form NAD. Uses ammonia as a nitrogen source. The polypeptide is NH(3)-dependent NAD(+) synthetase (Sulfurisphaera tokodaii (strain DSM 16993 / JCM 10545 / NBRC 100140 / 7) (Sulfolobus tokodaii)).